The sequence spans 101 residues: Small ribosomal subunit protein uS14 (101 aa).

It belongs to the universal ribosomal protein uS14 family. In terms of assembly, part of the 30S ribosomal subunit. Contacts proteins S3 and S10.

Its function is as follows. Binds 16S rRNA, required for the assembly of 30S particles and may also be responsible for determining the conformation of the 16S rRNA at the A site. The polypeptide is Small ribosomal subunit protein uS14 (Aliivibrio fischeri (strain ATCC 700601 / ES114) (Vibrio fischeri)).